The primary structure comprises 140 residues: Nucleoside diphosphate kinase (140 aa).

Positions 11, 59, 87, 93, 104, and 114 each coordinate ATP. The Pros-phosphohistidine intermediate role is filled by His117.

It belongs to the NDK family. Homotetramer. It depends on Mg(2+) as a cofactor.

The protein localises to the cytoplasm. It carries out the reaction a 2'-deoxyribonucleoside 5'-diphosphate + ATP = a 2'-deoxyribonucleoside 5'-triphosphate + ADP. It catalyses the reaction a ribonucleoside 5'-diphosphate + ATP = a ribonucleoside 5'-triphosphate + ADP. Major role in the synthesis of nucleoside triphosphates other than ATP. The ATP gamma phosphate is transferred to the NDP beta phosphate via a ping-pong mechanism, using a phosphorylated active-site intermediate. The sequence is that of Nucleoside diphosphate kinase from Sinorhizobium fredii (strain NBRC 101917 / NGR234).